A 567-amino-acid chain; its full sequence is Cytochrome P450 monooxygenase 231 (567 aa).

A helical membrane pass occupies residues 3-23 (VSTNELAILAIVLLATGVLFY). 2 N-linked (GlcNAc...) asparagine glycosylation sites follow: asparagine 81 and asparagine 223. Cysteine 475 is a binding site for heme.

It belongs to the cytochrome P450 family. The cofactor is heme.

Its subcellular location is the membrane. The protein operates within secondary metabolite biosynthesis. In terms of biological role, cytochrome P450 monooxygenase that is able to use anthracene, carbazole, pyrene, and phenanthrene as substrates for oxidation. These multifunctional properties against a series of polycyclic aromatic hydrocarbons (PAHs) suggest that CYP231 would play important roles, at least in part, in fungal metabolic systems involved in xenobiotic detoxification. The protein is Cytochrome P450 monooxygenase 231 of Postia placenta (strain ATCC 44394 / Madison 698-R) (Brown rot fungus).